The primary structure comprises 202 residues: Imidazole glycerol phosphate synthase subunit HisH 2 (202 aa).

The region spanning 1–202 (MIVVIDYGVG…QLFKNFVELV (202 aa)) is the Glutamine amidotransferase type-1 domain. Cys-80 (nucleophile) is an active-site residue. Active-site residues include His-183 and Glu-185.

Heterodimer of HisH and HisF.

Its subcellular location is the cytoplasm. The catalysed reaction is 5-[(5-phospho-1-deoxy-D-ribulos-1-ylimino)methylamino]-1-(5-phospho-beta-D-ribosyl)imidazole-4-carboxamide + L-glutamine = D-erythro-1-(imidazol-4-yl)glycerol 3-phosphate + 5-amino-1-(5-phospho-beta-D-ribosyl)imidazole-4-carboxamide + L-glutamate + H(+). It catalyses the reaction L-glutamine + H2O = L-glutamate + NH4(+). It participates in amino-acid biosynthesis; L-histidine biosynthesis; L-histidine from 5-phospho-alpha-D-ribose 1-diphosphate: step 5/9. IGPS catalyzes the conversion of PRFAR and glutamine to IGP, AICAR and glutamate. The HisH subunit catalyzes the hydrolysis of glutamine to glutamate and ammonia as part of the synthesis of IGP and AICAR. The resulting ammonia molecule is channeled to the active site of HisF. The polypeptide is Imidazole glycerol phosphate synthase subunit HisH 2 (hisH2) (Pseudomonas aeruginosa (strain ATCC 15692 / DSM 22644 / CIP 104116 / JCM 14847 / LMG 12228 / 1C / PRS 101 / PAO1)).